The sequence spans 186 residues: GMP synthase [glutamine-hydrolyzing] subunit A (186 aa).

The Glutamine amidotransferase type-1 domain maps to 2-186 (SIVIINNFGQ…ENFNKICENY (185 aa)). Catalysis depends on Cys76, which acts as the Nucleophile. Residues His163 and Glu165 contribute to the active site.

As to quaternary structure, heterodimer composed of a glutamine amidotransferase subunit (A) and a GMP-binding subunit (B).

The enzyme catalyses XMP + L-glutamine + ATP + H2O = GMP + L-glutamate + AMP + diphosphate + 2 H(+). Its pathway is purine metabolism; GMP biosynthesis; GMP from XMP (L-Gln route): step 1/1. Its function is as follows. Catalyzes the synthesis of GMP from XMP. This is GMP synthase [glutamine-hydrolyzing] subunit A from Methanosphaera stadtmanae (strain ATCC 43021 / DSM 3091 / JCM 11832 / MCB-3).